Here is a 258-residue protein sequence, read N- to C-terminus: Short-chain dehydrogenase/reductase olcF (258 aa).

Residues Val12, Asp58, and Arg120 each contribute to the NADP(+) site. Residue Ser138 is the Proton donor of the active site. NADP(+) contacts are provided by Tyr152, Lys156, and Val185. Tyr152 serves as the catalytic Proton acceptor. Lys156 functions as the Lowers pKa of active site Tyr in the catalytic mechanism.

Belongs to the short-chain dehydrogenases/reductases (SDR) family.

It functions in the pathway secondary metabolite biosynthesis; terpenoid biosynthesis. Its function is as follows. Short-chain dehydrogenase/reductase; part of the gene cluster that mediates the biosynthesis of 15-deoxyoxalicine B. The first step of the pathway is the synthesis of nicotinyl-CoA from nicotinic acid by the nicotinic acid-CoA ligase olcI. Nicotinyl-CoA is then a substrate of polyketide synthase olcA to produce 4-hydroxy-6-(3-pyridinyl)-2H-pyran-2-one (HPPO) which is further prenylated by the polyprenyl transferase olcH to yield geranylgeranyl-HPPO. Geranylgeranyl pyrophosphate is provided by the cluster-specific geranylgeranyl pyrophosphate synthase olcC. The FAD-dependent monooxygenase olcE catalyzes the epoxidation of geranylgeranyl-HPPO and the terpene cyclase olcD catalyzes the cyclization of the terpenoid component, resulting in the formation of the tricyclic terpene moiety seen in predecaturin E. The cytochrome P450 monooxygenase then catalyzes the allylic oxidation of predecaturin E, which is followed by spirocylization with concomitant loss of one molecule of water to form decaturin E. Decaturin E is the substrate of the cytochrome P450 monooxygenase olcJ which hydroxylates it at the C-29 position to form decaturin F. The short-chain dehydrogenase/reductase olcF may catalyze the oxidation of decaturin F to generate the 29-hydroxyl-27-one intermediate, and subsequent hemiacetal formation probably leads to the formation of decaturin C. The dioxygenase olcK may be a peroxisomal enzyme that catalyzes the hydroxylation of decaturin C into decaturin A once decaturin C is shuttled into the peroxisome by the MFS transporter olcL. Finally the cytochrome P450 monooxygenase olcB catalyzes the oxidative rearrangement to yield 15-deoxyoxalicine B. In the absence of olcJ, decaturin E may be shunted to a pathway in which it is oxidized to a ketone, possibly by olcF, to form decaturin D, which undergoes further allylic oxidation to yield decaturin G. Moreover, in the absence of oclK or oclL, oclB can convert decaturin C into 15-deoxyoxalicine A. The sequence is that of Short-chain dehydrogenase/reductase olcF from Penicillium canescens.